A 371-amino-acid polypeptide reads, in one-letter code: 3-methyl-D-ornithine--L-lysine ligase (371 aa).

Lys18 contacts ATP. 19–20 (LQ) contributes to the L-lysine binding site. ATP-binding positions include Asp39, 57 to 58 (NI), and 80 to 81 (EN). An L-lysine-binding site is contributed by Glu80. Residues 93–277 (EKFSCPVLFD…LIELLFRAFN (185 aa)) enclose the ATP-grasp domain. ADP is bound by residues Lys112, Lys139, Ser146, and 168–171 (EEYV). Residues 177–179 (SLE) and Asp233 each bind D-ornithine. Mg(2+) contacts are provided by Glu235, Glu247, and Asp249. Glu247 provides a ligand contact to ADP. D-ornithine is bound by residues 251-256 (RFPSQT) and Glu310. The L-lysine site is built by Ser254 and Glu310.

It belongs to the PylC family. The cofactor is Mg(2+).

The catalysed reaction is (3R)-3-methyl-D-ornithine + L-lysine + ATP = (3R)-3-methyl-D-ornithyl-N(6)-L-lysine + ADP + phosphate + H(+). It functions in the pathway amino-acid biosynthesis; L-pyrrolysine biosynthesis. Its function is as follows. Is required for the biosynthesis of pyrrolysine. Catalyzes the ATP-dependent ligation between (3R)-3-methyl-D-ornithine and L-lysine, leading to (3R)-3-methyl-D-ornithyl-N6-L-lysine. Is also involved in the synthesis of pyrroline-carboxy-lysine (Pcl), a demethylated form of pyrrolysine that is generated by the pyrrolysine biosynthetic enzymes when the growth media is supplemented with D-ornithine. The sequence is that of 3-methyl-D-ornithine--L-lysine ligase from Methanosarcina mazei (strain ATCC BAA-159 / DSM 3647 / Goe1 / Go1 / JCM 11833 / OCM 88) (Methanosarcina frisia).